Reading from the N-terminus, the 329-residue chain is Ferredoxin--NADP reductase 2 (329 aa).

The FAD site is built by Thr18, Glu37, Gln45, Tyr50, Val90, Phe124, Asp285, and Ser326.

Belongs to the ferredoxin--NADP reductase type 2 family. Homodimer. It depends on FAD as a cofactor.

It catalyses the reaction 2 reduced [2Fe-2S]-[ferredoxin] + NADP(+) + H(+) = 2 oxidized [2Fe-2S]-[ferredoxin] + NADPH. In Bacillus cytotoxicus (strain DSM 22905 / CIP 110041 / 391-98 / NVH 391-98), this protein is Ferredoxin--NADP reductase 2.